The following is a 187-amino-acid chain: Superoxide dismutase [Cu-Zn] (187 aa).

Positions 1–21 (MSLLPTGTLILLVLFILVLIT) are cleaved as a signal peptide. The Cu cation site is built by His-76, His-78, and His-93. Cys-87 and Cys-176 are disulfide-bonded. His-93, His-101, His-110, and Asp-113 together coordinate Zn(2+). His-150 contacts Cu cation.

It belongs to the Cu-Zn superoxide dismutase family. Cu cation is required as a cofactor. It depends on Zn(2+) as a cofactor.

It catalyses the reaction 2 superoxide + 2 H(+) = H2O2 + O2. Functionally, destroys radicals which are normally produced within the cells and which are toxic to biological systems. The chain is Superoxide dismutase [Cu-Zn] from Chlorella (PBCV-1).